The following is an 823-amino-acid chain: Dimethyl sulfoxide/trimethylamine N-oxide reductase (823 aa).

Positions 1 to 42 form a signal peptide, tat-type signal; it reads MTKFSGNELRAELYRRAFLSYSVAPGALGMFGRSLLAKGARA. Residues 156–160, W158, S189, 232–233, 262–263, 283–285, 364–365, R368, N476, H480, 500–501, R523, D553, 685–686, 691–693, N779, and 796–797 each bind Mo-bis(molybdopterin guanine dinucleotide); these read YGWKS, KT, ID, QTD, WS, HD, HP, HSQ, and GQ.

Homodimer. Requires Mo-bis(molybdopterin guanine dinucleotide) as cofactor. Predicted to be exported by the Tat system. The position of the signal peptide cleavage has been experimentally proven.

The protein localises to the periplasm. It carries out the reaction dimethyl sulfide + a menaquinone + H2O = dimethyl sulfoxide + a menaquinol. It catalyses the reaction trimethylamine + 2 Fe(III)-[cytochrome c] + H2O = trimethylamine N-oxide + 2 Fe(II)-[cytochrome c] + 3 H(+). In terms of biological role, catalyzes the reduction of dimethyl sulfoxide (DMSO) and trimethylamine N-oxide (TMAO) to dimethyl sulfide (DMS) and trimethylamine, respectively. The terminal DMSO reductase can also use various sulfoxides and N-oxide compounds as terminal electron acceptor in addition to DMSO and TMAO. This chain is Dimethyl sulfoxide/trimethylamine N-oxide reductase (dorA), found in Rhodobacter capsulatus (Rhodopseudomonas capsulata).